We begin with the raw amino-acid sequence, 421 residues long: Prenyltransferase asqH2 (421 aa).

Residues 1–28 form a disordered region; it reads MDRNSFTAYGPATGAITESGEQENDHTK. Residue glutamate 105 coordinates L-tryptophan. 5 residues coordinate substrate: arginine 119, arginine 272, lysine 274, tyrosine 276, and tyrosine 341.

It belongs to the tryptophan dimethylallyltransferase family.

It catalyses the reaction yaequinolone E + dimethylallyl diphosphate + H2O = [(1'E)-3'-hydroxy-3',7'-dimethylocta-1',6'-dien-1'-yl]-quinolinone B + diphosphate. It functions in the pathway secondary metabolite biosynthesis. The protein operates within alkaloid biosynthesis. It participates in mycotoxin biosynthesis. In terms of biological role, prenyltransferase; part of the gene cluster that mediates the biosynthesis of the aspoquinolone mycotoxins. Within the pathway, the prenyltransferase asqH2 performs the second alkylation with DMAPP at delta(3') double bond to yield a carbenium ion intermediate, which can be attacked by H(2)O to yield a styrenyl quinolone containing a C3'-hydroxyprenyl chain. The first step of the pathway is catalyzed by the nonribosomal peptide synthetase asqK that condenses anthranilic acid and O-methyl-L-tyrosine to produce 4'-methoxycyclopeptin. 4'-methoxycyclopeptin is then converted to 4'-methoxydehydrocyclopeptin by the ketoglutarate-dependent dioxygenase asqJ. AsqJ also converts its first product 4'-methoxydehydrocyclopeptin to 4'-methoxycyclopenin. The following conversion of 4'-methoxycyclopenin into 4'-methoxyviridicatin is catalyzed by the cyclopenase asqI. 4'-methoxyviridicatin is the precursor of quinolone natural products, and is further converted to quinolinone B. The prenyltransferase asqH1 then catalyzes the canonical Friedel-Crafts alkylation of quinolinone B with dimethylallyl cation to yield dimethylallyl quinolone, which is subjected to FAD-dependent dehydrogenation by the FAD-linked oxidoreductase asqF to yield conjugated aryl diene. The delta(3') double bond then serves as the site of the second alkylation with DMAPP catalyzed by the prenyltransferase asqH2 to yield a carbenium ion intermediate, which can be attacked by H(2)O to yield a styrenyl quinolone containing a C3'-hydroxyprenyl chain. The FAD-dependent monooxygenase asqG performs epoxidation of the terminal C7'-C8' olefin. Finally, after dehydratation of the epoxide at C3 by asqC, the quinolone epoxide rearrangement protein asqO catalyzes an enzymatic 3-exo-tet cyclization to yield the cyclopropyl-THF ring system in aspoquinolone. The polypeptide is Prenyltransferase asqH2 (Emericella nidulans (strain FGSC A4 / ATCC 38163 / CBS 112.46 / NRRL 194 / M139) (Aspergillus nidulans)).